A 181-amino-acid polypeptide reads, in one-letter code: Mating-type M-specific polypeptide Mc (181 aa).

The segment at residues 103–171 is a DNA-binding region (HMG box); the sequence is TPRPPNAFIL…QHQKMYPGYK (69 aa).

It localises to the nucleus. It is found in the cytoplasm. The protein resides in the cytoskeleton. Its subcellular location is the microtubule organizing center. The protein localises to the spindle pole body. Its function is as follows. Mating type proteins are sequence specific DNA-binding proteins that act as master switches in yeast differentiation by controlling gene expression in a cell type-specific fashion. Positive regulator of MFM genes. The HMG box recognizes the DNA sequence 5'-AACAAAG-3'. Required for conjugation and efficient meiosis. The sequence is that of Mating-type M-specific polypeptide Mc (mat3-Mc) from Schizosaccharomyces pombe (Fission yeast).